The following is a 210-amino-acid chain: Thymidylate kinase (210 aa).

10–17 (GPEGAGKS) contributes to the ATP binding site.

Belongs to the thymidylate kinase family.

It catalyses the reaction dTMP + ATP = dTDP + ADP. Functionally, phosphorylation of dTMP to form dTDP in both de novo and salvage pathways of dTTP synthesis. The polypeptide is Thymidylate kinase (Pseudomonas fluorescens (strain SBW25)).